Consider the following 514-residue polypeptide: Na(+)/H(+) antiporter NhaB (514 aa).

Transmembrane regions (helical) follow at residues 23 to 43 (LALL…PFIA), 63 to 83 (PLLP…TSAA), 97 to 117 (LLLM…LFIF), 120 to 140 (LLLS…AAAF), 144 to 164 (FLDA…FYGI), 202 to 222 (LMMH…VGEP), 238 to 258 (FFLR…LTCM), 303 to 323 (AVIG…VGLI), 357 to 377 (LTVF…APII), 391 to 411 (LFYL…VGTI), 447 to 467 (ATPN…APLI), and 475 to 495 (VWMA…CVEF).

Belongs to the NhaB Na(+)/H(+) (TC 2.A.34) antiporter family.

The protein resides in the cell inner membrane. The enzyme catalyses 2 Na(+)(in) + 3 H(+)(out) = 2 Na(+)(out) + 3 H(+)(in). Its function is as follows. Na(+)/H(+) antiporter that extrudes sodium in exchange for external protons. This chain is Na(+)/H(+) antiporter NhaB, found in Salmonella choleraesuis (strain SC-B67).